Consider the following 164-residue polypeptide: MNSSGGSCSSLMDVVAYDHHLHHGHDEELHVLAVDDNLIDRKLVERLLKISCCKVTTAENALRALEYLGLGDQNQHIDALTCNVMKVSLIITDYCMPGMTGFELLKKVKESSNLREVPVVIMSSENIPTRINKCLASGAQMFMQKPLKLADVEKLKCHLMNCRS.

Residues 30–160 (HVLAVDDNLI…DVEKLKCHLM (131 aa)) form the Response regulatory domain. The residue at position 93 (aspartate 93) is a 4-aspartylphosphate.

This sequence belongs to the ARR family. Type-A subfamily. Post-translationally, two-component system major event consists of a His-to-Asp phosphorelay between a sensor histidine kinase (HK) and a response regulator (RR). In plants, the His-to-Asp phosphorelay involves an additional intermediate named Histidine-containing phosphotransfer protein (HPt). This multistep phosphorelay consists of a His-Asp-His-Asp sequential transfer of a phosphate group between first a His and an Asp of the HK protein, followed by the transfer to a conserved His of the HPt protein and finally the transfer to an Asp in the receiver domain of the RR protein.

It is found in the nucleus. Its function is as follows. Functions as a response regulator involved in His-to-Asp phosphorelay signal transduction system. Phosphorylation of the Asp residue in the receiver domain activates the ability of the protein to promote the transcription of target genes. Type-A response regulators seem to act as negative regulators of the cytokinin signaling. In Arabidopsis thaliana (Mouse-ear cress), this protein is Two-component response regulator ARR16 (ARR16).